A 481-amino-acid polypeptide reads, in one-letter code: Cholesterol 16,22-dihydroxylase CYP90G4 (481 aa).

The helical transmembrane segment at 4-24 threads the bilayer; the sequence is SYLSFFVLSSILVLTLIFFFM. A heme-binding site is contributed by Cys426.

It belongs to the cytochrome P450 family. As to expression, mainly expressed in leaves and seed pods and, at low levels, in flowers and stems.

The protein localises to the membrane. It functions in the pathway steroid metabolism; cholesterol metabolism. Its function is as follows. Involved in the biosynthesis of spiroketal steroid and saponin natural products from cholesterol such as diosgenin and analogs (e.g. furostanol and spirostanol), plant defense compounds used as main precursors for the industrial production of steroid hormones. During the 5,6-spiroketalization of cholesterol, catalyzes the hydroxylation of cholesterol to form 16S,22S-dihydroxycholesterol and, possibly, the subsequent conversion of 16S,22S-dihydroxycholesterol into 16-oxo-22-hydroxy-cholesterol and 16-hydroxy-22-oxo-cholesterol. 16-hydroxy-22-oxo-cholesterol submit a spontaneous reaction leading to the production of furostanol-type steroid diastereomers, precursors of diosgenin. This chain is Cholesterol 16,22-dihydroxylase CYP90G4, found in Trigonella foenum-graecum (Fenugreek).